Here is a 130-residue protein sequence, read N- to C-terminus: Large ribosomal subunit protein bL17 (130 aa).

It belongs to the bacterial ribosomal protein bL17 family. In terms of assembly, part of the 50S ribosomal subunit. Contacts protein L32.

In Delftia acidovorans (strain DSM 14801 / SPH-1), this protein is Large ribosomal subunit protein bL17.